We begin with the raw amino-acid sequence, 825 residues long: Zinc finger protein 229 (825 aa).

A disordered region spans residues 1–26; it reads METLTSRHEKRALHSQASAISQDREE. The KRAB domain maps to 34–108; it reads LSFKDVAVVF…SHKELSSCKI (75 aa). The C2H2-type 1; degenerate zinc finger occupies 291–315; sequence KLCQYDEFSEGLRHSAHLNRHQRVP. 7 C2H2-type zinc fingers span residues 349-371, 377-399, 405-427, 433-455, 461-483, 489-511, and 517-539; these read YRCDVCGKGFRYKSVLLIHQGVH, YKCEECGKAFGRSSNLLVHQRVH, YKCSECGKGFSYSSVLQVHQRLH, YTCSECGKGFCAKSALHKHQHIH, YSCGECGKGFSCSSHLSSHQKTH, YQCDKCGKGFSHNSYLQAHQRVH, and YKCNVCGKSFSYSSGLLMHQRLH. Residue Lys-543 forms a Glycyl lysine isopeptide (Lys-Gly) (interchain with G-Cter in SUMO2) linkage. C2H2-type zinc fingers lie at residues 545 to 566, 572 to 594, 600 to 622, 628 to 650, 656 to 678, 684 to 706, 712 to 734, 740 to 762, 768 to 790, and 796 to 818; these read YKCECGKSFGRSSDLHIHQRVH, YKCSECGKGFRRNSDLHSHQRVH, YVCDVCGKGFIYSSDLLIHQRVH, YKCAECGKGFSYSSGLLIHQRVH, YRCQECGKGFRCTSSLHKHQRVH, YTCDQCGKGFSYGSNLRTHQRLH, YTCCECGKGFRYGSGLLSHKRVH, YRCHVCGKGYSQSSHLQGHQRVH, YKCEECGKGFGRNSCLHVHQRVH, and YTCGVCGKGFSYTSGLRNHQRVH.

This sequence belongs to the krueppel C2H2-type zinc-finger protein family.

It localises to the nucleus. Its function is as follows. May be involved in transcriptional regulation. The sequence is that of Zinc finger protein 229 from Homo sapiens (Human).